The chain runs to 333 residues: Glycerol-3-phosphate dehydrogenase [NAD(P)+] (333 aa).

NADPH-binding residues include Trp11, Arg34, and Lys107. The sn-glycerol 3-phosphate site is built by Lys107, Gly136, and Ser138. Residue Ala140 coordinates NADPH. Sn-glycerol 3-phosphate contacts are provided by Lys191, Asp244, Ser254, Arg255, and Asn256. Residue Lys191 is the Proton acceptor of the active site. Arg255 serves as a coordination point for NADPH. Residues Ile279 and Glu281 each coordinate NADPH.

The protein belongs to the NAD-dependent glycerol-3-phosphate dehydrogenase family.

It is found in the cytoplasm. It carries out the reaction sn-glycerol 3-phosphate + NAD(+) = dihydroxyacetone phosphate + NADH + H(+). It catalyses the reaction sn-glycerol 3-phosphate + NADP(+) = dihydroxyacetone phosphate + NADPH + H(+). Its pathway is membrane lipid metabolism; glycerophospholipid metabolism. Its function is as follows. Catalyzes the reduction of the glycolytic intermediate dihydroxyacetone phosphate (DHAP) to sn-glycerol 3-phosphate (G3P), the key precursor for phospholipid synthesis. The sequence is that of Glycerol-3-phosphate dehydrogenase [NAD(P)+] from Nitrosospira multiformis (strain ATCC 25196 / NCIMB 11849 / C 71).